Consider the following 56-residue polypeptide: UPF0434 protein WIGBR2520 (56 aa).

Belongs to the UPF0434 family.

The protein is UPF0434 protein WIGBR2520 of Wigglesworthia glossinidia brevipalpis.